We begin with the raw amino-acid sequence, 847 residues long: B-cell receptor CD22 (847 aa).

Residues 1–19 (MHLLGPWLLLLVLEYLAFC) form the signal peptide. The 119-residue stretch at 20-138 (DSSKWAFEHP…MERIHLNVSE (119 aa)) folds into the Ig-like V-type domain. At 20 to 687 (DSSKWAFEHP…YYSPETIGRR (668 aa)) the chain is on the extracellular side. 3 N-linked (GlcNAc...) asparagine glycosylation sites follow: Asn-67, Asn-101, and Asn-112. An N-acetylneuraminate-binding site is contributed by Arg-120. Residues Asn-135, Asn-164, Asn-231, Asn-295, Asn-363, Asn-428, Asn-445, Asn-448, and Asn-479 are each glycosylated (N-linked (GlcNAc...) asparagine). Ig-like C2-type domains lie at 143–235 (PHIQ…DTVQ), 242–324 (PKLE…AEVF), 331–416 (PEPS…LDVQ), 419–500 (PKKV…VALN), 505–582 (PRDV…QTAS), and 593–676 (PRRL…STLN). Cys-161 and Cys-219 form a disulfide bridge. Cystine bridges form between Cys-265–Cys-309 and Cys-353–Cys-396. Cystine bridges form between Cys-442/Cys-484 and Cys-529/Cys-571. 2 N-linked (GlcNAc...) asparagine glycosylation sites follow: Asn-574 and Asn-634. Cysteines 616 and 659 form a disulfide. Residues 688-708 (VAVGLGSCLAILILAICGLKL) traverse the membrane as a helical segment. Topologically, residues 709-847 (QRRWKRTQSQ…ENVDYVILKH (139 aa)) are cytoplasmic. Phosphoserine occurs at positions 725, 726, and 729. 2 consecutive short sequence motifs (ITIM motif) follow at residues 760–765 (ISYTTL) and 794–799 (VTYSVL). Tyr-762 is modified (phosphotyrosine). A phosphotyrosine mark is found at Tyr-807, Tyr-822, and Tyr-842. Short sequence motifs (ITIM motif) lie at residues 820-825 (IHYSEL) and 840-845 (VDYVIL).

The protein belongs to the immunoglobulin superfamily. SIGLEC (sialic acid binding Ig-like lectin) family. As to quaternary structure, predominantly monomer of isoform CD22-beta. Also found as heterodimer of isoform CD22-beta and a shorter isoform. Interacts with PTPN6/SHP-1, LYN, SYK, PIK3R1/PIK3R2 and PLCG1 upon phosphorylation. Interacts with GRB2, INPP5D and SHC1 upon phosphorylation. May form a complex with INPP5D/SHIP, GRB2 and SHC1. Phosphorylation of Tyr-762, Tyr-807 and Tyr-822 are involved in binding to SYK, GRB2 and SYK, respectively. Phosphorylation of Tyr-842 is involved in binding to SYK, PLCG2 and PIK3R1/PIK3R2. Post-translationally, phosphorylated on tyrosine residues by LYN.

It localises to the cell membrane. Functionally, most highly expressed siglec (sialic acid-binding immunoglobulin-like lectin) on B-cells that plays a role in various aspects of B-cell biology including differentiation, antigen presentation, and trafficking to bone marrow. Binds to alpha 2,6-linked sialic acid residues of surface molecules such as CD22 itself, CD45 and IgM in a cis configuration. Can also bind to ligands on other cells as an adhesion molecule in a trans configuration. Acts as an inhibitory coreceptor on the surface of B-cells and inhibits B-cell receptor induced signaling, characterized by inhibition of the calcium mobilization and cellular activation. Mechanistically, the immunoreceptor tyrosine-based inhibitory motif domain is phosphorylated by the Src kinase LYN, which in turn leads to the recruitment of the protein tyrosine phosphatase 1/PTPN6, leading to the negative regulation of BCR signaling. If this negative signaling from is of sufficient strength, apoptosis of the B-cell can be induced. The chain is B-cell receptor CD22 from Gorilla gorilla gorilla (Western lowland gorilla).